The chain runs to 420 residues: Glucose-1-phosphate adenylyltransferase (420 aa).

Residues Tyr-107, Gly-173, 188 to 189 (EK), and Ser-206 contribute to the alpha-D-glucose 1-phosphate site.

It belongs to the bacterial/plant glucose-1-phosphate adenylyltransferase family. In terms of assembly, homotetramer.

The enzyme catalyses alpha-D-glucose 1-phosphate + ATP + H(+) = ADP-alpha-D-glucose + diphosphate. Its pathway is glycan biosynthesis; glycogen biosynthesis. Functionally, involved in the biosynthesis of ADP-glucose, a building block required for the elongation reactions to produce glycogen. Catalyzes the reaction between ATP and alpha-D-glucose 1-phosphate (G1P) to produce pyrophosphate and ADP-Glc. The polypeptide is Glucose-1-phosphate adenylyltransferase (Shewanella frigidimarina (strain NCIMB 400)).